Reading from the N-terminus, the 103-residue chain is uncharacterized protein (103 aa).

The protein localises to the plastid. It is found in the chloroplast. This is an uncharacterized protein from Auxenochlorella pyrenoidosa (Freshwater green alga).